Consider the following 240-residue polypeptide: Adenylate dimethylallyltransferase (240 aa).

The protein belongs to the isopentenyl transferase family.

It carries out the reaction dimethylallyl diphosphate + AMP = N(6)-(dimethylallyl)adenosine 5'-phosphate + diphosphate. In terms of biological role, transfers dimethylallyl groups to AMP as part of the biosynthesis of cytokinin phytohormones. In Agrobacterium tumefaciens (strain Ach5), this protein is Adenylate dimethylallyltransferase (izt).